Here is a 243-residue protein sequence, read N- to C-terminus: Carboxy-S-adenosyl-L-methionine synthase (243 aa).

Residues tyrosine 40, 65-67, 90-91, 118-119, asparagine 133, and arginine 200 contribute to the S-adenosyl-L-methionine site; these read GSS, DN, and DI.

Belongs to the class I-like SAM-binding methyltransferase superfamily. Cx-SAM synthase family. Homodimer.

It carries out the reaction prephenate + S-adenosyl-L-methionine = carboxy-S-adenosyl-L-methionine + 3-phenylpyruvate + H2O. Catalyzes the conversion of S-adenosyl-L-methionine (SAM) to carboxy-S-adenosyl-L-methionine (Cx-SAM). The polypeptide is Carboxy-S-adenosyl-L-methionine synthase (Shewanella frigidimarina (strain NCIMB 400)).